Consider the following 130-residue polypeptide: MAIVGVGIDLVSIPDFAEQVDRPGTVFAETFTPGERRDAADKSSSAARHLAARWAAKEAVIKAWSSSRFSKRPALPEGIHRDIEVVTDMWGRPKVRLSGEIAKHLEDVTIHVSLTHEDQTAAAVAIIEEP.

Positions 9 and 58 each coordinate Mg(2+).

This sequence belongs to the P-Pant transferase superfamily. AcpS family. It depends on Mg(2+) as a cofactor.

The protein resides in the cytoplasm. It catalyses the reaction apo-[ACP] + CoA = holo-[ACP] + adenosine 3',5'-bisphosphate + H(+). Functionally, transfers the 4'-phosphopantetheine moiety from coenzyme A to a Ser of acyl-carrier-protein. This is Holo-[acyl-carrier-protein] synthase from Mycolicibacterium smegmatis (strain ATCC 700084 / mc(2)155) (Mycobacterium smegmatis).